Reading from the N-terminus, the 371-residue chain is uncharacterized protein (371 aa).

It belongs to the glycerate kinase type-1 family.

This is an uncharacterized protein from Synechocystis sp. (strain ATCC 27184 / PCC 6803 / Kazusa).